Consider the following 462-residue polypeptide: Centrosomal protein of 55 kDa (462 aa).

The span at 1–11 (MSSRSPKDLIK) shows a compositional bias: basic and acidic residues. The segment at 1 to 26 (MSSRSPKDLIKSKWGSRPSSSKSDTA) is disordered. Low complexity predominate over residues 12 to 23 (SKWGSRPSSSKS). Residues 50 to 400 (KMAEKGRSRL…TQLESLKQLH (351 aa)) are a coiled coil. Phosphoserine occurs at positions 96 and 99. Residues 157–235 (ANCFNSSMNS…EGYLQVEKQK (79 aa)) form an interaction with TSG101 region. The interaction with PDCD6IP stretch occupies residues 160-214 (FNSSMNSIHEKEMQLKDALEKNQQWLVYDQQREAYVKGLLAKIFELEKRTETAAA). The segment at 354–462 (QMQACTLDFE…LLVHVEYCMK (109 aa)) is required for localization to the interphase centrosome and to the midbody during cytokinesis. The disordered stretch occupies residues 410 to 430 (PLQREPESRVKATSPKSPSAA). 3 positions are modified to phosphoserine: Ser-423, Ser-426, and Ser-428. Position 434 is a phosphoserine; by PLK1 (Ser-434).

In terms of assembly, homodimer. Interacts (phosphorylated on Ser-423 and Ser-426) with PLK1; the interaction is indirect via the MTMR3:MTMR4 heterooligomer, occurs during early mitosis, regulates the phosphorylation of CEP55 by PLK1 and its recruitment to the midbody where it can mediate cell abscission. Interacts with AKAP9/CG-NAP; the interaction occurs in interphase and is lost upon mitotic entry. Interacts with PCNT/Kendrin; the interaction occurs in interphase and is lost upon mitotic entry. Directly interacts with PDCD6IP; this interaction is required for PDCD6IP targeting to the midbody; CEP55 binds PDCD6IP in a 2:1 stoichiometry; PDCD6IP competes with TSG101 for the same binding site. Interacts with TSG101; TSG101 competes with PDCD6IP for the same binding site; interaction is required for cytokinesis. Interacts with MVB12A, VPS37B, VPS37C and VPS28. Post-translationally, there is a hierachy of phosphorylation, where both Ser-423 and Ser-426 are phosphorylated at the onset of mitosis, prior to Ser-434. Phosphorylation at Ser-423 and Ser-426 is required for dissociation from the centrosome at the G2/M boundary. Phosphorylation at the 3 sites, Ser-423, Ser-426 and Ser-434, is required for protein function at the final stages of cell division to complete cytokinesis successfully.

The protein localises to the cytoplasm. It localises to the cytoskeleton. The protein resides in the microtubule organizing center. Its subcellular location is the centrosome. It is found in the centriole. The protein localises to the cleavage furrow. It localises to the midbody. The protein resides in the midbody ring. Its function is as follows. Plays a role in mitotic exit and cytokinesis. Recruits PDCD6IP and TSG101 to midbody during cytokinesis. Required for successful completion of cytokinesis. Not required for microtubule nucleation. Plays a role in the development of the brain and kidney. This chain is Centrosomal protein of 55 kDa, found in Mus musculus (Mouse).